We begin with the raw amino-acid sequence, 290 residues long: Sodium/potassium-transporting ATPase subunit beta-2 (290 aa).

Residues 1-39 (MVIQKEKKSCGQVVEEWKEFVWNPRTHQFMGRTGTSWAF) lie on the Cytoplasmic side of the membrane. The helical; Signal-anchor for type II membrane protein transmembrane segment at 40–67 (ILLFYLVFYGFLTAMFTLTMWVMLQTVS) threads the bilayer. Residues 68-290 (EHTPKYQDRL…VAFKLRINKT (223 aa)) lie on the Extracellular side of the membrane. Asn96 and Asn118 each carry an N-linked (GlcNAc...) asparagine glycan. A disulfide bridge links Cys129 with Cys150. 2 N-linked (GlcNAc...) asparagine glycosylation sites follow: Asn153 and Asn159. Cysteines 160 and 177 form a disulfide. N-linked (GlcNAc...) asparagine glycans are attached at residues Asn193, Asn197, and Asn238. The segment at 193–290 (NQSMNVTCAG…VAFKLRINKT (98 aa)) is immunoglobulin-like. Residues Cys200 and Cys261 are joined by a disulfide bond.

This sequence belongs to the X(+)/potassium ATPases subunit beta family. The sodium/potassium-transporting ATPase is composed of a catalytic alpha subunit, an auxiliary non-catalytic beta subunit and an additional regulatory subunit. Interacts with BSG.

It is found in the cell membrane. In terms of biological role, this is the non-catalytic component of the active enzyme, which catalyzes the hydrolysis of ATP coupled with the exchange of Na(+) and K(+) ions across the plasma membrane. The exact function of the beta-2 subunit is not known. Functionally, mediates cell adhesion of neurons and astrocytes, and promotes neurite outgrowth. The protein is Sodium/potassium-transporting ATPase subunit beta-2 (ATP1B2) of Oryctolagus cuniculus (Rabbit).